Consider the following 118-residue polypeptide: Small ribosomal subunit protein uS17 (118 aa).

The protein belongs to the universal ribosomal protein uS17 family. As to quaternary structure, part of the 30S ribosomal subunit.

In terms of biological role, one of the primary rRNA binding proteins, it binds specifically to the 5'-end of 16S ribosomal RNA. The polypeptide is Small ribosomal subunit protein uS17 (Methanopyrus kandleri (strain AV19 / DSM 6324 / JCM 9639 / NBRC 100938)).